Reading from the N-terminus, the 228-residue chain is L-ribulose-5-phosphate 4-epimerase UlaF (228 aa).

Residues Gly-26 to Asn-27, Ser-43 to Gly-44, and Ser-72 to Ser-73 each bind substrate. 3 residues coordinate Zn(2+): Asp-74, His-93, and His-95. The active-site Proton donor/acceptor is the Asp-118. His-167 lines the Zn(2+) pocket. Tyr-225 acts as the Proton donor/acceptor in catalysis.

It belongs to the aldolase class II family. AraD/FucA subfamily. Zn(2+) serves as cofactor.

It carries out the reaction L-ribulose 5-phosphate = D-xylulose 5-phosphate. It functions in the pathway cofactor degradation; L-ascorbate degradation; D-xylulose 5-phosphate from L-ascorbate: step 4/4. Functionally, catalyzes the isomerization of L-ribulose 5-phosphate to D-xylulose 5-phosphate. Is involved in the anaerobic L-ascorbate utilization. This is L-ribulose-5-phosphate 4-epimerase UlaF from Escherichia coli (strain K12 / MC4100 / BW2952).